The following is a 90-amino-acid chain: Small ribosomal subunit protein uS15c (90 aa).

This sequence belongs to the universal ribosomal protein uS15 family. As to quaternary structure, part of the 30S ribosomal subunit.

The protein resides in the plastid. The protein localises to the chloroplast. The polypeptide is Small ribosomal subunit protein uS15c (rps15) (Panax ginseng (Korean ginseng)).